A 215-amino-acid chain; its full sequence is Beta-crystallin A3 (215 aa).

The N-terminal arm stretch occupies residues 1 to 30 (MGEAAVPPELDTFPAAKMAQTNPLPVPMGP). Beta/gamma crystallin 'Greek key' domains lie at 31–70 (WKITVYDQENFQGKRMEFTSACPNIMECGFDNIRSLKVEC) and 71–117 (GAWV…RPVC). The segment at 118–123 (SANHKE) is connecting peptide. 2 Beta/gamma crystallin 'Greek key' domains span residues 124–165 (SKIT…KIPC) and 166–214 (GAWV…RRIQ).

Belongs to the beta/gamma-crystallin family. As to quaternary structure, homo/heterodimer, or complexes of higher-order. The structure of beta-crystallin oligomers seems to be stabilized through interactions between the N-terminal arms.

In terms of biological role, crystallins are the dominant structural components of the vertebrate eye lens. The protein is Beta-crystallin A3 (CRYBA1) of Gallus gallus (Chicken).